The sequence spans 377 residues: Mannan endo-1,4-beta-mannosidase A (377 aa).

The N-terminal stretch at 1 to 18 is a signal peptide; the sequence is MKLSHMLLSLASLGVATA. Trp84 provides a ligand contact to substrate. Asn105 carries N-linked (GlcNAc...) asparagine glycosylation. Asn197 lines the substrate pocket. The active-site Proton donor is Glu198. N-linked (GlcNAc...) asparagine glycosylation occurs at Asn255. A substrate-binding site is contributed by Tyr273. The active-site Nucleophile is the Glu306. Asn326 is a glycosylation site (N-linked (GlcNAc...) asparagine). Trp336 is a substrate binding site. The N-linked (GlcNAc...) asparagine glycan is linked to Asn357.

This sequence belongs to the glycosyl hydrolase 5 (cellulase A) family.

It is found in the secreted. It carries out the reaction Random hydrolysis of (1-&gt;4)-beta-D-mannosidic linkages in mannans, galactomannans and glucomannans.. Endo-1,4-mannanase, a crucial enzyme for depolymerization of seed galactomannans and wood galactoglucomannans. This Aspergillus aculeatus protein is Mannan endo-1,4-beta-mannosidase A (manA).